Reading from the N-terminus, the 236-residue chain is Eukaryotic translation initiation factor 3 subunit J (236 aa).

Residues 1 to 84 are disordered; sequence MADDWESAAD…LREEEAEAER (84 aa). The span at 28 to 46 shows a compositional bias: acidic residues; that stretch reads GEDEDEDIKDSWEDEEEKK. Basic and acidic residues-rich tracts occupy residues 47–58 and 68–77; these read DEEKPTKTEAPA and AKLEQQALRE.

This sequence belongs to the eIF-3 subunit J family. Component of the eukaryotic translation initiation factor 3 (eIF-3) complex. The eIF-3 complex interacts with pix.

It is found in the cytoplasm. Component of the eukaryotic translation initiation factor 3 (eIF-3) complex, which is involved in protein synthesis of a specialized repertoire of mRNAs and, together with other initiation factors, stimulates binding of mRNA and methionyl-tRNAi to the 40S ribosome. The eIF-3 complex specifically targets and initiates translation of a subset of mRNAs involved in cell proliferation. In Drosophila sechellia (Fruit fly), this protein is Eukaryotic translation initiation factor 3 subunit J.